The chain runs to 216 residues: Probable RNA 2'-phosphotransferase 1 (216 aa).

The protein belongs to the KptA/TPT1 family.

Removes the 2'-phosphate from RNA via an intermediate in which the phosphate is ADP-ribosylated by NAD followed by a presumed transesterification to release the RNA and generate ADP-ribose 1''-2''-cyclic phosphate (APPR&gt;P). May function as an ADP-ribosylase. This chain is Probable RNA 2'-phosphotransferase 1 (kptA1), found in Archaeoglobus fulgidus (strain ATCC 49558 / DSM 4304 / JCM 9628 / NBRC 100126 / VC-16).